We begin with the raw amino-acid sequence, 380 residues long: Palmitoyltransferase ZDHHC18 (380 aa).

The segment at 1–59 is disordered; the sequence is MKDCEYQQISPGAAPPPASPGARRPGPAAPPAPSPGPAPGAPRWSGSGSGSGSLGRRPR. Over 1-82 the chain is Cytoplasmic; sequence MKDCEYQQIS…CGGRLMLAGH (82 aa). The residue at position 19 (Ser19) is a Phosphoserine. Over residues 27-40 the composition is skewed to pro residues; that stretch reads PAAPPAPSPGPAPG. Residues 83–103 traverse the membrane as a helical segment; that stretch reads GGVFALTLLLILSTTILFFVF. Residues 104-111 lie on the Lumenal side of the membrane; that stretch reads DCPYLART. A helical membrane pass occupies residues 112–132; sequence LTLAIPIIAAILFFFVMSCLL. The Cytoplasmic segment spans residues 133-227; the sequence is QTSFTDPGIL…GNCVGRRNYR (95 aa). The DHHC domain occupies 184 to 234; sequence KYCFTCKMFRPPRTSHCSVCDNCVERFDHHCPWVGNCVGRRNYRFFYAFIL. Cys214 acts as the S-palmitoyl cysteine intermediate in catalysis. Residues 228–248 form a helical membrane-spanning segment; sequence FFYAFILSLSFLTAFIFACVV. The Lumenal portion of the chain corresponds to 249 to 269; sequence THLTLLSQGSNFLSALKKTPA. A helical membrane pass occupies residues 270 to 290; the sequence is SVLELVICFFSIWSILGLSGF. Topologically, residues 291 to 380 are cytoplasmic; the sequence is HTYLVASNLT…PDASMVGGHP (90 aa). The interval 355–380 is disordered; sequence ALPSPIRSDDPACGAKPDASMVGGHP.

This sequence belongs to the DHHC palmitoyltransferase family. ERF2/ZDHHC9 subfamily. As to expression, ubiquitously expressed.

It is found in the golgi apparatus membrane. It catalyses the reaction L-cysteinyl-[protein] + hexadecanoyl-CoA = S-hexadecanoyl-L-cysteinyl-[protein] + CoA. In terms of biological role, palmitoyltransferase that catalyzes the addition of palmitate onto various protein substrates, such as CGAS, HRAS and LCK. Palmitoylates HRAS and LCK. Acts as a negative regulator of the cGAS-STING pathway be mediating palmitoylation and inactivation of CGAS. May also have a palmitoyltransferase activity toward the beta-2 adrenergic receptor/ADRB2 and therefore regulate G protein-coupled receptor signaling. The polypeptide is Palmitoyltransferase ZDHHC18 (Mus musculus (Mouse)).